We begin with the raw amino-acid sequence, 269 residues long: Subtilisin Savinase (269 aa).

Gln2 is a binding site for Ca(2+). A Peptidase S8 domain is found at 5–268; sequence PWGISRVQAP…SGLVNAEAAT (264 aa). Asp32 serves as the catalytic Charge relay system. Position 40 (Asp40) interacts with Ca(2+). Catalysis depends on His62, which acts as the Charge relay system. Positions 73, 75, 77, 79, 163, 165, and 168 each coordinate Ca(2+). The active-site Charge relay system is the Ser215.

The protein belongs to the peptidase S8 family. Requires Ca(2+) as cofactor.

The protein localises to the secreted. The enzyme catalyses Hydrolysis of proteins with broad specificity for peptide bonds, and a preference for a large uncharged residue in P1. Hydrolyzes peptide amides.. Functionally, subtilisin is an extracellular alkaline serine protease, it catalyzes the hydrolysis of proteins and peptide amides. The polypeptide is Subtilisin Savinase (Lederbergia lenta (Bacillus lentus)).